The following is a 400-amino-acid chain: tRNA(Ile)-lysidine synthase (400 aa).

ATP is bound at residue 20-25; sequence SGGLDS.

The protein belongs to the tRNA(Ile)-lysidine synthase family.

The protein resides in the cytoplasm. It catalyses the reaction cytidine(34) in tRNA(Ile2) + L-lysine + ATP = lysidine(34) in tRNA(Ile2) + AMP + diphosphate + H(+). Functionally, ligates lysine onto the cytidine present at position 34 of the AUA codon-specific tRNA(Ile) that contains the anticodon CAU, in an ATP-dependent manner. Cytidine is converted to lysidine, thus changing the amino acid specificity of the tRNA from methionine to isoleucine. The chain is tRNA(Ile)-lysidine synthase from Wigglesworthia glossinidia brevipalpis.